The chain runs to 155 residues: RNA pyrophosphohydrolase (155 aa).

Positions 6 to 148 (GYRANVAIVL…KQEVYRKALT (143 aa)) constitute a Nudix hydrolase domain. The short motif at 38–59 (GGVDTGETPLQAMYRELHEEIG) is the Nudix box element.

This sequence belongs to the Nudix hydrolase family. RppH subfamily. A divalent metal cation serves as cofactor.

Functionally, accelerates the degradation of transcripts by removing pyrophosphate from the 5'-end of triphosphorylated RNA, leading to a more labile monophosphorylated state that can stimulate subsequent ribonuclease cleavage. In Francisella tularensis subsp. mediasiatica (strain FSC147), this protein is RNA pyrophosphohydrolase.